Here is a 48-residue protein sequence, read N- to C-terminus: Large ribosomal subunit protein bL32 (48 aa).

Positions 1 to 20 are enriched in basic residues; that stretch reads MAVPKRRVSKTRAAKRRTHY. Positions 1–48 are disordered; it reads MAVPKRRVSKTRAAKRRTHYKVSLPMPIKDKDGSYKMPHRANPTTKEY.

Belongs to the bacterial ribosomal protein bL32 family.

This chain is Large ribosomal subunit protein bL32 (rpmF), found in Campylobacter jejuni subsp. jejuni serotype O:2 (strain ATCC 700819 / NCTC 11168).